A 172-amino-acid polypeptide reads, in one-letter code: Adenine phosphoribosyltransferase (172 aa).

This sequence belongs to the purine/pyrimidine phosphoribosyltransferase family. Homodimer.

Its subcellular location is the cytoplasm. The catalysed reaction is AMP + diphosphate = 5-phospho-alpha-D-ribose 1-diphosphate + adenine. The protein operates within purine metabolism; AMP biosynthesis via salvage pathway; AMP from adenine: step 1/1. Functionally, catalyzes a salvage reaction resulting in the formation of AMP, that is energically less costly than de novo synthesis. In Synechococcus sp. (strain CC9605), this protein is Adenine phosphoribosyltransferase.